The chain runs to 458 residues: 3-isopropylmalate dehydratase large subunit (458 aa).

[4Fe-4S] cluster is bound by residues Cys339, Cys399, and Cys402.

The protein belongs to the aconitase/IPM isomerase family. LeuC type 1 subfamily. As to quaternary structure, heterodimer of LeuC and LeuD. The cofactor is [4Fe-4S] cluster.

It carries out the reaction (2R,3S)-3-isopropylmalate = (2S)-2-isopropylmalate. Its pathway is amino-acid biosynthesis; L-leucine biosynthesis; L-leucine from 3-methyl-2-oxobutanoate: step 2/4. Catalyzes the isomerization between 2-isopropylmalate and 3-isopropylmalate, via the formation of 2-isopropylmaleate. This is 3-isopropylmalate dehydratase large subunit from Lactococcus lactis subsp. cremoris (strain SK11).